A 504-amino-acid polypeptide reads, in one-letter code: Peroxisomal catalase (504 aa).

Residues H63 and N136 contribute to the active site. A heme-binding site is contributed by Y345. The Microbody targeting signal signature appears at 502–504 (NKF).

The protein belongs to the catalase family. Heme serves as cofactor.

The protein resides in the peroxisome matrix. It catalyses the reaction 2 H2O2 = O2 + 2 H2O. Functionally, catalyzes the degradation of hydrogen peroxide (H(2)O(2)) generated by peroxisomal oxidases to water and oxygen, thereby protecting cells from the toxic effects of hydrogen peroxide. The protein is Peroxisomal catalase (CTA1) of Candida boidinii (Yeast).